We begin with the raw amino-acid sequence, 491 residues long: V-type proton ATPase subunit B 1 (491 aa).

Arg380 is an ATP binding site.

Belongs to the ATPase alpha/beta chains family. In terms of assembly, V-ATPase is a heteromultimeric enzyme made up of two complexes: the ATP-hydrolytic V1 complex and the proton translocation V0 complex. The V1 complex consists of three catalytic AB heterodimers that form a heterohexamer, three peripheral stalks each consisting of EG heterodimers, one central rotor including subunits D and F, and the regulatory subunits C and H. The proton translocation complex V0 consists of the proton transport subunit a, a ring of proteolipid subunits c9c'', rotary subunit d, subunits e and f, and the accessory subunits vah-19/Ac45 and vah-20/PRR. As to expression, expressed ubiquitously. Highly expressed in the H-shaped excretory cell, the excretory pore, the intestine, and hypodermal cells. Expressed in the nervous system. Expressed at low levels in muscles.

Functionally, non-catalytic subunit of the V1 complex of vacuolar(H+)-ATPase (V-ATPase), a multisubunit enzyme composed of a peripheral complex (V1) that hydrolyzes ATP and a membrane integral complex (V0) that translocates protons. V-ATPase is responsible for acidifying and maintaining the pH of intracellular compartments and in some cell types, is targeted to the plasma membrane, where it is responsible for acidifying the extracellular environment. Essential for the proper assembly and activity of V-ATPase. Required maternally for early embryogenesis and zygotically during morphogenesis. Specifically, involved in the clearance of apoptotic cell corpses in embryos. Also, during embryonic development, the V-ATPase is required to repress fusion of epidermal cells probably by negatively regulating eff-1-mediated cell fusion. In neurons, required for necrotic cell death by promoting intracellular acidification. Required for cell death induced by hypoxia. Required for acidification of synaptic vesicles and the release of neurotransmitters from adult neurons. This Caenorhabditis elegans protein is V-type proton ATPase subunit B 1.